Consider the following 264-residue polypeptide: Glycerol uptake facilitator protein (264 aa).

The Cytoplasmic portion of the chain corresponds to 1-3 (MDK). The helical transmembrane segment at 4-32 (SLKANCIGEFLGTALLIFFGVGCVAALKV) threads the bilayer. Topologically, residues 33–37 (AGASF) are periplasmic. A helical transmembrane segment spans residues 38-58 (GLWEISIMWGMGVALAVYATA). The Cytoplasmic segment spans residues 59–61 (GLS). An intramembrane segment occupies 62-65 (GAHL). An NPA 1 motif is present at residues 66-68 (NPA). The helical intramembrane region spans 66-76 (NPAVTIALWKF). Residues 77 to 82 (ACFDGK) lie on the Cytoplasmic side of the membrane. The chain crosses the membrane as a helical span at residues 83–106 (KVIPYIISQMLGAFFAAALVYALY). Residues 107-141 (RNVFIDYETVHNIVRGTQESLSLAGTFSTYPHPSL) lie on the Periplasmic side of the membrane. Residues 142-167 (SIGGAFAVEFVITAILMALIMALTDD) form a helical membrane-spanning segment. Over 168 to 175 (GNGVPRGP) the chain is Cytoplasmic. Residues 176 to 192 (LAPLLIGILIAVIGGAM) form a helical membrane-spanning segment. Residues 193–196 (GPLT) are Periplasmic-facing. Residues 197 to 200 (GFAM) lie within the membrane without spanning it. Residues 201 to 203 (NPA) carry the NPA 2 motif. Positions 201–214 (NPARDFGPKFFAYL) form an intramembrane region, helical. The Periplasmic portion of the chain corresponds to 215–229 (AGWGELALTGGREIP). A helical membrane pass occupies residues 230-252 (YFIVPMVAPVLGALAGAWLYKKA). At 253–264 (IGGNLPCNCGCE) the chain is on the cytoplasmic side.

It belongs to the MIP/aquaporin (TC 1.A.8) family.

The protein resides in the cell inner membrane. It carries out the reaction glycerol(in) = glycerol(out). In terms of biological role, mediates glycerol diffusion across the cytoplasmic membrane via a pore-type mechanism. The polypeptide is Glycerol uptake facilitator protein (glpF) (Haemophilus influenzae (strain ATCC 51907 / DSM 11121 / KW20 / Rd)).